Reading from the N-terminus, the 212-residue chain is Thymidylate kinase (212 aa).

10–17 (GIDGCGKT) contributes to the ATP binding site.

The protein belongs to the thymidylate kinase family.

It carries out the reaction dTMP + ATP = dTDP + ADP. Functionally, phosphorylation of dTMP to form dTDP in both de novo and salvage pathways of dTTP synthesis. In Prochlorococcus marinus (strain AS9601), this protein is Thymidylate kinase.